Consider the following 218-residue polypeptide: Small ribosomal subunit protein uS3c (218 aa).

A KH type-2 domain is found at 47–118 (VQKQIKNSSN…KIQITLKNVL (72 aa)).

The protein belongs to the universal ribosomal protein uS3 family. Part of the 30S ribosomal subunit.

It is found in the plastid. The protein resides in the chloroplast. This Angiopteris evecta (Mule's foot fern) protein is Small ribosomal subunit protein uS3c (rps3).